An 839-amino-acid chain; its full sequence is Phosphatidylinositol-glycan-specific phospholipase D (839 aa).

The signal sequence occupies residues Met-1 to Pro-23. 5 N-linked (GlcNAc...) asparagine glycosylation sites follow: Asn-94, Asn-271, Asn-292, Asn-307, and Asn-321. FG-GAP repeat units follow at residues Ser-365–Arg-427, Lys-434–Ser-496, Ser-498–Arg-558, Asn-562–Arg-622, Gln-632–Arg-692, Ser-703–Asp-769, and Gln-787–Asp-839. N-linked (GlcNAc...) asparagine glycosylation is found at Asn-500, Asn-590, and Asn-658.

The protein belongs to the GPLD1 family. As to quaternary structure, monomer. Glycosylated.

The protein resides in the secreted. It catalyses the reaction a 6-(alpha-D-glucosaminyl)-1-(1,2-diacyl-sn-glycero-3-phospho)-1D-myo-inositol + H2O = 6-(alpha-D-glucosaminyl)-1D-myo-inositol + a 1,2-diacyl-sn-glycero-3-phosphate + H(+). Its function is as follows. This protein hydrolyzes the inositol phosphate linkage in proteins anchored by phosphatidylinositol glycans (GPI-anchor) thus releasing these proteins from the membrane. In Bos taurus (Bovine), this protein is Phosphatidylinositol-glycan-specific phospholipase D (GPLD1).